A 354-amino-acid chain; its full sequence is GDSL esterase/lipase At3g09930 (354 aa).

A signal peptide spans 1-24 (MELPKLLISLFLFSFSSFFLGAES). Serine 46 (nucleophile) is an active-site residue. Asparagine 133, asparagine 233, asparagine 237, asparagine 256, and asparagine 300 each carry an N-linked (GlcNAc...) asparagine glycan. Active-site residues include aspartate 329 and histidine 332.

This sequence belongs to the 'GDSL' lipolytic enzyme family.

The protein resides in the secreted. In Arabidopsis thaliana (Mouse-ear cress), this protein is GDSL esterase/lipase At3g09930.